We begin with the raw amino-acid sequence, 407 residues long: V-set and immunoglobulin domain-containing protein 1 (407 aa).

Residues 1 to 22 form the signal peptide; the sequence is MMVFAFWKVFLILNCLAGQVSM. The Ig-like V-type domain occupies 23 to 134; it reads VQVTIPDTFV…HFVGKNQGLL (112 aa). Residues 23 to 234 lie on the Extracellular side of the membrane; sequence VQVTIPDTFV…EIDLTSSHPE (212 aa). A glycan (N-linked (GlcNAc...) asparagine) is linked at N39. 2 cysteine pairs are disulfide-bonded: C44-C118 and C163-C213. The Ig-like C2-type domain occupies 145 to 229; it reads PFCTIQGRPE…GNSSCEIDLT (85 aa). N-linked (GlcNAc...) asparagine glycosylation is found at N202 and N221. The chain crosses the membrane as a helical span at residues 235–255; the sequence is VGIIIGALVGALIGAAVIICV. The Cytoplasmic segment spans residues 256-407; it reads VYFARNKVKS…SKAGEDTVKA (152 aa). 2 disordered regions span residues 268–289 and 318–407; these read QKNL…PQQS and TAVL…TVKA. Phosphoserine is present on residues S273 and S274. The span at 361-371 shows a compositional bias: acidic residues; the sequence is DPETETEPEPE.

It is found in the membrane. The sequence is that of V-set and immunoglobulin domain-containing protein 1 (Vsig1) from Mus musculus (Mouse).